The primary structure comprises 221 residues: 7-cyano-7-deazaguanine synthase (221 aa).

7–17 (LSGGMDSSTLA) is a binding site for ATP. Zn(2+) contacts are provided by Cys-187, Cys-195, Cys-198, and Cys-201.

The protein belongs to the QueC family. It depends on Zn(2+) as a cofactor.

It carries out the reaction 7-carboxy-7-deazaguanine + NH4(+) + ATP = 7-cyano-7-deazaguanine + ADP + phosphate + H2O + H(+). It functions in the pathway purine metabolism; 7-cyano-7-deazaguanine biosynthesis. Catalyzes the ATP-dependent conversion of 7-carboxy-7-deazaguanine (CDG) to 7-cyano-7-deazaguanine (preQ(0)). The protein is 7-cyano-7-deazaguanine synthase of Methanosphaerula palustris (strain ATCC BAA-1556 / DSM 19958 / E1-9c).